The sequence spans 309 residues: tRNA dimethylallyltransferase (309 aa).

13 to 20 lines the ATP pocket; it reads GPTAVGKS. 15 to 20 contributes to the substrate binding site; sequence TAVGKS.

It belongs to the IPP transferase family. As to quaternary structure, monomer. Requires Mg(2+) as cofactor.

The catalysed reaction is adenosine(37) in tRNA + dimethylallyl diphosphate = N(6)-dimethylallyladenosine(37) in tRNA + diphosphate. Its function is as follows. Catalyzes the transfer of a dimethylallyl group onto the adenine at position 37 in tRNAs that read codons beginning with uridine, leading to the formation of N6-(dimethylallyl)adenosine (i(6)A). The polypeptide is tRNA dimethylallyltransferase (Lacticaseibacillus paracasei (strain ATCC 334 / BCRC 17002 / CCUG 31169 / CIP 107868 / KCTC 3260 / NRRL B-441) (Lactobacillus paracasei)).